Reading from the N-terminus, the 374-residue chain is Probable neutral protease 2 homolog ARB_00849 (374 aa).

A signal peptide spans 1 to 19 (MKFLTALSAIGALVATATA). A propeptide spanning residues 20-189 (AAVPNTPAKQ…KKSRGTIDKR (170 aa)) is cleaved from the precursor. Intrachain disulfides connect C197–C268 and C275–C293. H318 is a Zn(2+) binding site. Residue E319 is part of the active site. Residues H322 and D333 each contribute to the Zn(2+) site.

It belongs to the peptidase M35 family. It depends on Zn(2+) as a cofactor.

It is found in the secreted. The catalysed reaction is Preferential cleavage of bonds with hydrophobic residues in P1'. Also 3-Asn-|-Gln-4 and 8-Gly-|-Ser-9 bonds in insulin B chain.. Its function is as follows. Probable secreted metalloprotease that shows high activities on basic nuclear substrates such as histone and protamine. May be involved in virulence. This Arthroderma benhamiae (strain ATCC MYA-4681 / CBS 112371) (Trichophyton mentagrophytes) protein is Probable neutral protease 2 homolog ARB_00849.